The primary structure comprises 549 residues: Teichoic acids export ATP-binding protein TagH (549 aa).

Positions 22-243 constitute an ABC transporter domain; the sequence is DKLKDLFFRS…YDEFLKKYNQ (222 aa). An ATP-binding site is contributed by 57 to 64; the sequence is GLNGSGKS. Residues 244–549 are unknown; that stretch reads MSVEERKDLR…EIQSISIVKK (306 aa). The SH3b domain occupies 346–415; sequence AAKYIVNSNG…ISTKFIEPFK (70 aa).

Belongs to the ABC transporter superfamily. Teichoic acids exporter (TC 3.A.1.104.1) family. As to quaternary structure, the complex is composed of two ATP-binding proteins (TagH) and two transmembrane proteins (TagG).

Its subcellular location is the cell membrane. It catalyses the reaction ATP + H2O + teichoic acidSide 1 = ADP + phosphate + teichoic acidSide 2.. Its function is as follows. Part of the ABC transporter complex TagGH involved in teichoic acids export. Responsible for energy coupling to the transport system. In Bacillus anthracis, this protein is Teichoic acids export ATP-binding protein TagH.